A 1347-amino-acid polypeptide reads, in one-letter code: Serine-aspartate repeat-containing protein D (1347 aa).

A signal peptide spans 1 to 35 (MLNRENKTAITRKGMVSNRLNKFSIRKYTVGTASI). The YSIRK-G/S signaling motif signature appears at 23 to 34 (FSIRKYTVGTAS). The ligand binding A region stretch occupies residues 36 to 568 (LVGTTLIFGL…NNQSGGAGQE (533 aa)). The disordered stretch occupies residues 55–185 (STNKELNEAT…NKKVDAKTES (131 aa)). 2 stretches are compositionally biased toward polar residues: residues 62-71 (EATTSASDNQ) and 94-109 (EMVS…NGNK). Residues 130–145 (KSDEQASPKSTNEDLN) show a composition bias toward basic and acidic residues. Composition is skewed to polar residues over residues 146 to 155 (TKQTISNQEA) and 163 to 173 (NKSVVNAQPTN). Over residues 174-183 (EENKKVDAKT) the composition is skewed to basic and acidic residues. CNA-B domains lie at 569-680 (VYKI…IYKP), 681-791 (KYNL…YKTP), 792-901 (KYNL…FYKP), 902-1012 (TYNL…YKTS), and 1013-1123 (KYSL…EEDT). Disordered stretches follow at residues 857–883 (ETPS…TSTT), 972–992 (YTPT…GLTT), and 1078–1323 (EKPA…SNNA). 2 stretches are compositionally biased toward polar residues: residues 860–869 (SGYTPTQVGS) and 972–981 (YTPTSVTSGN). Acidic residues-rich tracts occupy residues 1091 to 1101 (TEDDKDADGGE) and 1118 to 1286 (YFEE…DSDS). Positions 1310-1314 (LPETG) match the LPXTG sorting signal motif. Thr-1313 bears the Pentaglycyl murein peptidoglycan amidated threonine mark. Residues 1314 to 1347 (GNENSGSNNATLFGGLFAALGSLLLFGRRKKQNK) constitute a propeptide, removed by sortase.

The protein belongs to the serine-aspartate repeat-containing protein (SDr) family. As to quaternary structure, interacts with host DSG1; this interaction increases S.aureus adherence to keratinocytes.

Its subcellular location is the secreted. It localises to the cell wall. Cell surface-associated calcium-binding protein which plays an important role in adhesion and pathogenesis. Mediates interactions with components of the extracellular matrix such as host DSG1 to promote bacterial adhesion to host cells. Contributes to the resistance to killing by innate immune components such as neutrophils present in blood and thus attenuates bacterial clearance. This is Serine-aspartate repeat-containing protein D (sdrD) from Staphylococcus aureus (strain MW2).